The sequence spans 563 residues: Autotransporter BimA (563 aa).

The tract at residues 1 to 20 (MKYRRLSLAHARQDSGQAAS) is disordered. The signal sequence occupies residues 1–48 (MKYRRLSLAHARQDSGQAASNARSRRFARLLCSSIAPLALGFSADAFA). Residues 61-472 (APNDAHGNLL…NLAISNSNAY (412 aa)) are surface exposed passenger domain. One can recognise a WH2 domain in the interval 65–82 (AHGNLLDEIRRGVPLRHV). A central and acidic domains region spans residues 96-130 (TLADAMRRVIDSRRTAFDSPPATPASPSPSWSDDE). A disordered region spans residues 109–350 (RTAFDSPPAT…PARPGGGQFT (242 aa)). Low complexity-rich tracts occupy residues 138-150 (ATRP…SAAR), 162-197 (PASA…STPR), and 211-227 (SPAA…AHSR). 2 stretches are compositionally biased toward polar residues: residues 228–238 (GSTQPPSNLST) and 269–281 (SRGS…NLST). The interval 473-509 (TNQRIGDLQQSITETARDAYSGVAAATALTMIPDVDR) is outer membrane translocation of the passenger domain. Transmembrane regions (beta stranded) follow at residues 510–519 (DKMLSIGVGG), 525–536 (HRAVALGGTARI), 543–549 (RAGVAMS), and 553–563 (NTVGVGMSWQW). The interval 510–563 (DKMLSIGVGGAVYKGHRAVALGGTARIGENLKVRAGVAMSAGGNTVGVGMSWQW) is translocator domain.

The protein belongs to the autotransporter-2 (AT-2) (TC 1.B.40) family. In terms of assembly, homotrimer. Interacts with host G-actin; the interaction is direct. Interacts (via central and acidic domains) with host ACTR2/ARP2 and ACTR3/ARP3.

Its subcellular location is the cell outer membrane. It is found in the cell surface. In terms of biological role, during host cell infection, required for actin-based intracellular motility. Mediates actin tail formation at one pole of the bacteria surface by recruiting host Arp2/3 (ACTR3/ARP3-ACTR2/ARP2) which leads to actin polymerization which provides the propulsive force for intracellular movement and intercellular dissemination of the bacterium. This chain is Autotransporter BimA, found in Burkholderia thailandensis (strain ATCC 700388 / DSM 13276 / CCUG 48851 / CIP 106301 / E264).